We begin with the raw amino-acid sequence, 361 residues long: Phosphoserine aminotransferase (361 aa).

The L-glutamate site is built by serine 9 and arginine 42. Pyridoxal 5'-phosphate is bound by residues 76–77, tryptophan 103, threonine 153, aspartate 173, and glutamine 196; that span reads AR. Lysine 197 is modified (N6-(pyridoxal phosphate)lysine). 238–239 lines the pyridoxal 5'-phosphate pocket; that stretch reads NT.

Belongs to the class-V pyridoxal-phosphate-dependent aminotransferase family. SerC subfamily. As to quaternary structure, homodimer. Pyridoxal 5'-phosphate is required as a cofactor.

Its subcellular location is the cytoplasm. It catalyses the reaction O-phospho-L-serine + 2-oxoglutarate = 3-phosphooxypyruvate + L-glutamate. It carries out the reaction 4-(phosphooxy)-L-threonine + 2-oxoglutarate = (R)-3-hydroxy-2-oxo-4-phosphooxybutanoate + L-glutamate. It functions in the pathway amino-acid biosynthesis; L-serine biosynthesis; L-serine from 3-phospho-D-glycerate: step 2/3. It participates in cofactor biosynthesis; pyridoxine 5'-phosphate biosynthesis; pyridoxine 5'-phosphate from D-erythrose 4-phosphate: step 3/5. In terms of biological role, catalyzes the reversible conversion of 3-phosphohydroxypyruvate to phosphoserine and of 3-hydroxy-2-oxo-4-phosphonooxybutanoate to phosphohydroxythreonine. The protein is Phosphoserine aminotransferase of Wigglesworthia glossinidia brevipalpis.